Consider the following 537-residue polypeptide: Caspase recruitment domain-containing protein 8 (537 aa).

A compositionally biased stretch (basic and acidic residues) spans 1 to 23 (MEKKECPEKSSSSEEELPRRDSG). 2 disordered regions span residues 1 to 28 (MEKK…SRNI) and 113 to 133 (GDIP…SGDI). Residues 161-296 (FLGPEGNVDV…FYAVLESPSF (136 aa)) are ZU5. In terms of domain architecture, FIIND spans 161 to 446 (FLGPEGNVDV…LQLVAASAPP (286 aa)). The segment at 297–446 (SLMGILLRIA…LQLVAASAPP (150 aa)) is UPA. The CARD domain occupies 446 to 536 (PPFSGAAFVK…YLVSYLRQQN (91 aa)).

As to quaternary structure, interacts with DPP9; leading to inhibit activation of the inflammasome. DPP9 acts via formation of a ternary complex, composed of a DPP9 homodimer, one full-length CARD8 protein, and one cleaved C-terminus of CARD8 (Caspase recruitment domain-containing protein 8, C-terminus). Interacts with DPP8; leading to inhibit activation of the inflammasome, probably via formation of a ternary complex with DPP8. Interacts with NLRP3. Interacts with IKBKG/NEMO. Interacts with DRAL. Binds to caspase-1 (CASP1), CARD16/pseudo-ICE and CARD18/ICEBERG. Interacts with NLRP2 (via NACHT domain). In terms of assembly, interacts with the C-terminal part of CARD8 (Caspase recruitment domain-containing protein 8, C-terminus) in absence of pathogens and other damage-associated signals. Interacts with the N-terminal part of CARD8 (Caspase recruitment domain-containing protein 8, N-terminus) in absence of pathogens and other damage-associated signals. Homomultimer; forms the CARD8 inflammasome polymeric complex, a filament composed of homopolymers of this form in response to pathogens and other damage-associated signals. The CARD8 inflammasome polymeric complex directly recruits pro-caspase-1 (proCASP1) independently of PYCARD/ASC. Interacts (via CARD domain) with CASP1 (via CARD domain); leading to CASP1 activation. Undergoes autocatalytic processing within the FIIND domain to generate the N-terminal and C-terminal parts, which are associated non-covalently in absence of pathogens and other damage-associated signals. Post-translationally, ubiquitinated by the N-end rule pathway in response to pathogens and other damage-associated signals, leading to its degradation by the proteasome and subsequent release of the cleaved C-terminal part of the protein (Caspase recruitment domain-containing protein 8, C-terminus), which polymerizes and forms the CARD8 inflammasome. In terms of processing, (Microbial infection) Proteolytic cleavage by HIV-1 protease in the disordered region and within the ZU5 region of the FIIND domain promotes ubiquitination of the N-terminal part by the N-end rule pathway and degradation by the proteasome, releasing the cleaved C-terminal part of the protein (Caspase recruitment domain-containing protein 8, C-terminus), which polymerizes and forms the CARD8 inflammasome. Undergoes less autocatalytic processing within the FIIND domain compared to isoform 5. In terms of tissue distribution, high expression in lung, ovary, testis and placenta. Lower expression in heart, kidney and liver. Also expressed in spleen, lymph node and bone marrow.

The protein resides in the cytoplasm. It localises to the nucleus. The protein localises to the inflammasome. CARD8 inflammasome is activated by HIV-1 protease activity: HIV-1 protease cleaves CARD8, promoting ubiquitination and degradation of the N-terminal part, releasing the cleaved C-terminal part of the protein (Caspase recruitment domain-containing protein 8, C-terminus), which polymerizes and forms the CARD8 inflammasome. CARD8 inflammasome is inhibited by DPP8 and DPP9, which sequester the C-terminal fragment of CARD8 (Caspase recruitment domain-containing protein 8, C-terminus) in a ternary complex, thereby preventing CARD8 oligomerization and activation. CARD8 inflammasome is activated by Val-boroPro (Talabostat, PT-100), an inhibitor of dipeptidyl peptidases DPP8 and DPP9. Val-boroPro relieves inhibition of DPP8 and/or DPP9 by inducing the proteasome-mediated destruction of the N-terminal part of CARD8, releasing its C-terminal part from autoinhibition. Indirectly activated by the pseudodipeptide CQ31. CQ31 directly inactivates the peptidases PEPD and XPNPEP1, leading to an accumulation of dipeptides that weaky inhibit DDP8 and DPP9, relieving DPP8- and/or DPP9-mediated inhibition of CARD8. Its function is as follows. Inflammasome sensor, which mediates inflammasome activation in response to various pathogen-associated signals, leading to subsequent pyroptosis of CD4(+) T-cells and macrophages. Inflammasomes are supramolecular complexes that assemble in the cytosol in response to pathogens and other damage-associated signals and play critical roles in innate immunity and inflammation. Acts as a recognition receptor (PRR): recognizes specific pathogens and other damage-associated signals, such as HIV-1 protease activity or Val-boroPro inhibitor, and mediates CARD8 inflammasome activation. In response to pathogen-associated signals, the N-terminal part of CARD8 is degraded by the proteasome, releasing the cleaved C-terminal part of the protein (Caspase recruitment domain-containing protein 8, C-terminus), which polymerizes to initiate the formation of the inflammasome complex: the CARD8 inflammasome directly recruits pro-caspase-1 (proCASP1) independently of PYCARD/ASC and promotes caspase-1 (CASP1) activation, which subsequently cleaves and activates inflammatory cytokines IL1B and IL18 and gasdermin-D (GSDMD), leading to pyroptosis. Ability to sense HIV-1 protease activity leads to the clearance of latent HIV-1 in patient CD4(+) T-cells after viral reactivation; in contrast, HIV-1 can evade CARD8-sensing when its protease remains inactive in infected cells prior to viral budding. Also acts as a negative regulator of the NLRP3 inflammasome. May also act as an inhibitor of NF-kappa-B activation. In terms of biological role, constitutes the precursor of the CARD8 inflammasome, which mediates autoproteolytic processing within the FIIND domain to generate the N-terminal and C-terminal parts, which are associated non-covalently in absence of pathogens and other damage-associated signals. Regulatory part that prevents formation of the CARD8 inflammasome: in absence of pathogens and other damage-associated signals, interacts with the C-terminal part of CARD8 (Caspase recruitment domain-containing protein 8, C-terminus), preventing activation of the CARD8 inflammasome. In response to pathogen-associated signals, this part is ubiquitinated by the N-end rule pathway and degraded by the proteasome, releasing the cleaved C-terminal part of the protein, which polymerizes and forms the CARD8 inflammasome. Functionally, constitutes the active part of the CARD8 inflammasome. In absence of pathogens and other damage-associated signals, interacts with the N-terminal part of CARD8 (Caspase recruitment domain-containing protein 8, N-terminus), preventing activation of the CARD8 inflammasome. In response to pathogen-associated signals, the N-terminal part of CARD8 is degraded by the proteasome, releasing this form, which polymerizes to form the CARD8 inflammasome complex: the CARD8 inflammasome complex then directly recruits pro-caspase-1 (proCASP1) and promotes caspase-1 (CASP1) activation, leading to gasdermin-D (GSDMD) cleavage and subsequent pyroptosis. This chain is Caspase recruitment domain-containing protein 8, found in Homo sapiens (Human).